Here is an 874-residue protein sequence, read N- to C-terminus: Lon protease (874 aa).

In terms of domain architecture, Lon N-terminal spans 18 to 261 (LPVLPLDDAV…RLLTWTKEHL (244 aa)). 3 disordered regions span residues 47 to 68 (VDAA…GISS), 120 to 144 (GGVR…SGAG), and 298 to 318 (LSEL…EPAD). Over residues 124–142 (PAPAGTDTTGTGTADATSG) the composition is skewed to low complexity. Residue 430-437 (GPPGVGKT) participates in ATP binding. A Lon proteolytic domain is found at 667-851 (TALPGVATGL…REVLDLALEP (185 aa)). Residues serine 757 and lysine 800 contribute to the active site. Positions 853–874 (FDADHGGRSPGRAGHSPTALAA) are disordered.

This sequence belongs to the peptidase S16 family. Homohexamer. Organized in a ring with a central cavity.

The protein resides in the cytoplasm. It carries out the reaction Hydrolysis of proteins in presence of ATP.. Its function is as follows. ATP-dependent serine protease that mediates the selective degradation of mutant and abnormal proteins as well as certain short-lived regulatory proteins. Required for cellular homeostasis and for survival from DNA damage and developmental changes induced by stress. Degrades polypeptides processively to yield small peptide fragments that are 5 to 10 amino acids long. Binds to DNA in a double-stranded, site-specific manner. This Frankia alni (strain DSM 45986 / CECT 9034 / ACN14a) protein is Lon protease.